The chain runs to 312 residues: Nicotinamide adenine dinucleotide transporter 1, chloroplastic (312 aa).

Solcar repeat units lie at residues 11–103, 111–199, and 211–299; these read KNVL…LKSF, LSVG…IKVY, and LNAR…VHRF. The next 6 helical transmembrane spans lie at 17-37, 78-98, 117-137, 171-191, 216-232, and 271-293; these read AAAG…LDVI, GLSP…TMYD, VLAA…LWVV, GLYS…IQFP, VAVA…TLTY, and FYRG…FTSF.

It belongs to the mitochondrial carrier (TC 2.A.29) family. In terms of tissue distribution, highly expressed in young leaf mesophyll cells, root tips and at the branches of adventitious roots. Low expression in all flower tissues and not detected in siliques and seeds.

The protein resides in the plastid. The protein localises to the chloroplast membrane. Its activity is regulated as follows. Inhibited by pyridoxal 5'-phosphate, bathophenanthroline, tannic acid, mersalyl, mercuric chloride, p-hydroxymercuribenzoate, p-hydroxymercuribenzoate sulfonate, bromocresol purple and N-ethylmaleimide. Mediates the NAD(+) import into chloroplast. Favors the NAD(+)(in)/ADP or AMP(out) antiport exchange, but is also able to catalyze a low unidirectional transport (uniport) of NAD(+). Transports NAD(+), nicotinic acid adenine dinucleotide, nicotinamide mononucleotide, nicotinic acid mononucleotide, FAD, FMN, TTP, TDP, TMP, UTP, UDP, UMP, CTP, CDP, CMP, GTP, GDP, GMP, 3'-AMP, ATP, ADP, and AMP, has low transport activity with cAMP, pyrophosphate, NADH and alpha-NAD(+), and has no activity with NADP(+), NADPH, nicotinamide, nicotinic acid, adenosine, thiamine mono- or diphosphate, inorganic phosphate, CoA, folate, NaCl, malate, malonate, citrate, fumarate, aspartate, glutamate, S-adenosylmethionine, lysine, arginine, and ornithine. This chain is Nicotinamide adenine dinucleotide transporter 1, chloroplastic (NDT1), found in Arabidopsis thaliana (Mouse-ear cress).